The chain runs to 526 residues: Biotin carboxylase 2, chloroplastic (526 aa).

Residues 1-71 (MEATLPVCKS…GVTCRAEKIL (71 aa)) constitute a chloroplast transit peptide. ATP-binding positions include Lys181, 213–274 (ASEI…PRHI), Lys223, 229–230 (GG), 265–268 (EKYV), and His273. The ATP-grasp domain occupies 185-382 (RETMKKANVP…LIEEQIRVAM (198 aa)). Lys302 lines the hydrogencarbonate pocket. ATP is bound by residues Glu340 and Glu353. Positions 340, 353, and 355 each coordinate Mg(2+). Mn(2+) contacts are provided by Glu340, Glu353, and Asn355. Arg357, Val360, and Arg403 together coordinate hydrogencarbonate. Residue Arg357 is part of the active site. Biotin is bound at residue Arg403.

In terms of assembly, acetyl-CoA carboxylase is a heterohexamer composed of biotin carboxyl carrier protein, biotin carboxylase and two subunits each of ACCase subunit alpha and ACCase plastid-coded subunit beta (accD). Mg(2+) serves as cofactor. Requires Mn(2+) as cofactor.

It localises to the plastid. The protein localises to the chloroplast. It carries out the reaction N(6)-biotinyl-L-lysyl-[protein] + hydrogencarbonate + ATP = N(6)-carboxybiotinyl-L-lysyl-[protein] + ADP + phosphate + H(+). It functions in the pathway lipid metabolism; malonyl-CoA biosynthesis; malonyl-CoA from acetyl-CoA: step 1/1. This protein is a component of the acetyl coenzyme A carboxylase complex; first, biotin carboxylase catalyzes the carboxylation of the carrier protein and then the transcarboxylase transfers the carboxyl group to form malonyl-CoA. This is Biotin carboxylase 2, chloroplastic from Populus trichocarpa (Western balsam poplar).